The sequence spans 337 residues: Casein kinase II subunit alpha (337 aa).

Residues Y47–F332 enclose the Protein kinase domain. Residues I53–V61 and K76 contribute to the ATP site. Catalysis depends on D164, which acts as the Proton acceptor.

This sequence belongs to the protein kinase superfamily. CMGC Ser/Thr protein kinase family. CK2 subfamily. In terms of assembly, tetramer of two alpha and two beta chains.

It catalyses the reaction L-seryl-[protein] + ATP = O-phospho-L-seryl-[protein] + ADP + H(+). The enzyme catalyses L-threonyl-[protein] + ATP = O-phospho-L-threonyl-[protein] + ADP + H(+). In terms of biological role, casein kinases are operationally defined by their preferential utilization of acidic proteins such as caseins as substrates. The alpha chain contains the catalytic site. This chain is Casein kinase II subunit alpha (casK), found in Dictyostelium discoideum (Social amoeba).